A 339-amino-acid chain; its full sequence is Olfactory receptor 7E24 (339 aa).

At 1-43 the chain is on the extracellular side; it reads MSYFPILFFFFLKRCPSYTEPQNLTGVSEFLLLGLSEDPELQP. Residue Asn-23 is glycosylated (N-linked (GlcNAc...) asparagine). The chain crosses the membrane as a helical span at residues 44-64; sequence VLAGLFLSMYLVTVLGNLLII. The Cytoplasmic portion of the chain corresponds to 65 to 72; it reads LAVSSDSH. The chain crosses the membrane as a helical span at residues 73-93; that stretch reads LHTPMYFFLSNLSLADIGFTS. Residues 94–117 lie on the Extracellular side of the membrane; sequence TTVPKMIVDMQTHSRVISYEGCLT. Cysteines 115 and 207 form a disulfide. The helical transmembrane segment at 118-138 threads the bilayer; the sequence is QMSFFVLFACMDDMLLSVMAY. Topologically, residues 139–157 are cytoplasmic; the sequence is DRFVAICHPLHYRIIMNPR. Residues 158-178 form a helical membrane-spanning segment; sequence LCGFLILLSFFISLLDSQLHN. Over 179–215 the chain is Extracellular; sequence LIMLQLTCFKDVDISNFFCDPSQLLHLRCSDTFINEM. Residues 216–235 traverse the membrane as a helical segment; that stretch reads VIYFMGAIFGCLPISGILFS. Over 236-255 the chain is Cytoplasmic; that stretch reads YYKIVSPILRVPTSDGKYKA. Residues 256–276 traverse the membrane as a helical segment; it reads FSTCGSHLAVVCLFYGTGLVG. The Extracellular segment spans residues 277-289; the sequence is YLSSAVLPSPRKS. A helical membrane pass occupies residues 290 to 310; it reads MVASVMYTVVTPMLNPFIYSL. The Cytoplasmic portion of the chain corresponds to 311–339; that stretch reads RNKDIQSALCRLHGRIIKSHHLHPFCYMG.

It belongs to the G-protein coupled receptor 1 family.

Its subcellular location is the cell membrane. Odorant receptor. This is Olfactory receptor 7E24 (OR7E24) from Homo sapiens (Human).